Reading from the N-terminus, the 83-residue chain is Cytochrome c5 (83 aa).

Heme c is bound by residues C15, C18, H19, and M59. A disulfide bridge connects residues C65 and C68.

Belongs to the cytochrome c family. Homodimer. In terms of processing, binds 1 heme c group covalently per subunit.

It is unreactive with cytochrome c reductase or oxidase. This Azotobacter vinelandii protein is Cytochrome c5.